Here is a 447-residue protein sequence, read N- to C-terminus: ATP-dependent protease ATPase subunit HslU (447 aa).

ATP is bound by residues isoleucine 17, 59–64 (GVGKTE), aspartate 256, glutamate 321, and arginine 393.

The protein belongs to the ClpX chaperone family. HslU subfamily. In terms of assembly, a double ring-shaped homohexamer of HslV is capped on each side by a ring-shaped HslU homohexamer. The assembly of the HslU/HslV complex is dependent on binding of ATP.

It is found in the cytoplasm. In terms of biological role, ATPase subunit of a proteasome-like degradation complex; this subunit has chaperone activity. The binding of ATP and its subsequent hydrolysis by HslU are essential for unfolding of protein substrates subsequently hydrolyzed by HslV. HslU recognizes the N-terminal part of its protein substrates and unfolds these before they are guided to HslV for hydrolysis. In Pseudomonas putida (strain ATCC 47054 / DSM 6125 / CFBP 8728 / NCIMB 11950 / KT2440), this protein is ATP-dependent protease ATPase subunit HslU.